We begin with the raw amino-acid sequence, 139 residues long: Exodeoxyribonuclease 7 small subunit (139 aa).

2 disordered regions span residues 1–26 (MAKK…LGDF) and 82–139 (DAEG…EDDE). Residues 130–139 (ADLDSAEDDE) are compositionally biased toward acidic residues.

It belongs to the XseB family. As to quaternary structure, heterooligomer composed of large and small subunits.

Its subcellular location is the cytoplasm. The enzyme catalyses Exonucleolytic cleavage in either 5'- to 3'- or 3'- to 5'-direction to yield nucleoside 5'-phosphates.. Functionally, bidirectionally degrades single-stranded DNA into large acid-insoluble oligonucleotides, which are then degraded further into small acid-soluble oligonucleotides. This chain is Exodeoxyribonuclease 7 small subunit, found in Rhodopirellula baltica (strain DSM 10527 / NCIMB 13988 / SH1).